The sequence spans 137 residues: uncharacterized protein (137 aa).

The disordered stretch occupies residues 1–32 (MRDHLPPGLPPDPFADDPCDPSAALDAVEPGQ).

It to M.tuberculosis Rv3412.

This is an uncharacterized protein from Mycobacterium leprae (strain TN).